Reading from the N-terminus, the 159-residue chain is SsrA-binding protein (159 aa).

Residues 137–159 form a disordered region; the sequence is DKRETEKQRDWSREKGRLLKERG.

Belongs to the SmpB family.

Its subcellular location is the cytoplasm. In terms of biological role, required for rescue of stalled ribosomes mediated by trans-translation. Binds to transfer-messenger RNA (tmRNA), required for stable association of tmRNA with ribosomes. tmRNA and SmpB together mimic tRNA shape, replacing the anticodon stem-loop with SmpB. tmRNA is encoded by the ssrA gene; the 2 termini fold to resemble tRNA(Ala) and it encodes a 'tag peptide', a short internal open reading frame. During trans-translation Ala-aminoacylated tmRNA acts like a tRNA, entering the A-site of stalled ribosomes, displacing the stalled mRNA. The ribosome then switches to translate the ORF on the tmRNA; the nascent peptide is terminated with the 'tag peptide' encoded by the tmRNA and targeted for degradation. The ribosome is freed to recommence translation, which seems to be the essential function of trans-translation. In Mesorhizobium japonicum (strain LMG 29417 / CECT 9101 / MAFF 303099) (Mesorhizobium loti (strain MAFF 303099)), this protein is SsrA-binding protein.